We begin with the raw amino-acid sequence, 158 residues long: Small ribosomal subunit protein bS16 (158 aa).

Low complexity predominate over residues 111–121 (AAAGLAEAPTK). A disordered region spans residues 111–158 (AAAGLAEAPTKPAKKAPKAEAAPKTEAAPKADAPKTEEQAGAGSGEQG). Positions 127-148 (PKAEAAPKTEAAPKADAPKTEE) are enriched in basic and acidic residues.

This sequence belongs to the bacterial ribosomal protein bS16 family.

In Salinispora arenicola (strain CNS-205), this protein is Small ribosomal subunit protein bS16.